The primary structure comprises 287 residues: Vesicle-associated protein 4-3 (287 aa).

Basic and acidic residues predominate over residues 1 to 14; the sequence is MALTEDKSDSDGRR. A disordered region spans residues 1 to 45; that stretch reads MALTEDKSDSDGRRWGKFKLPFRNSNSQAPSASSSSSMATSSSSV. Residues 25-45 show a composition bias toward low complexity; it reads SNSQAPSASSSSSMATSSSSV. Positions 99–221 constitute an MSP domain; sequence RLKLDPSAKL…EEQVMRVVFL (123 aa).

The protein belongs to the VAMP-associated protein (VAP) (TC 9.B.17) family.

In terms of biological role, may play a role in vesicle trafficking. This Arabidopsis thaliana (Mouse-ear cress) protein is Vesicle-associated protein 4-3 (PVA43).